The chain runs to 177 residues: Large ribosomal subunit protein uL6 (177 aa).

The protein belongs to the universal ribosomal protein uL6 family. In terms of assembly, part of the 50S ribosomal subunit.

Its function is as follows. This protein binds to the 23S rRNA, and is important in its secondary structure. It is located near the subunit interface in the base of the L7/L12 stalk, and near the tRNA binding site of the peptidyltransferase center. This Citrobacter koseri (strain ATCC BAA-895 / CDC 4225-83 / SGSC4696) protein is Large ribosomal subunit protein uL6.